Here is a 70-residue protein sequence, read N- to C-terminus: Protein SlyX homolog (70 aa).

This sequence belongs to the SlyX family.

The polypeptide is Protein SlyX homolog (Shewanella putrefaciens (strain CN-32 / ATCC BAA-453)).